We begin with the raw amino-acid sequence, 570 residues long: Protein translocase subunit SecD (570 aa).

A compositionally biased stretch (polar residues) spans 104–117; sequence GANATGTPSASETG. The tract at residues 104–198 is disordered; the sequence is GANATGTPSA…SASASGDDAT (95 aa). Residues 122–146 are compositionally biased toward basic and acidic residues; it reads KATDKATDKATDKATDGDKATDGDK. 2 stretches are compositionally biased toward low complexity: residues 147 to 161 and 172 to 196; these read ASGTPSDSASASATS and ADPSPSATSSDGASPSPSASASGDD. Helical transmembrane passes span 370 to 390, 395 to 415, 419 to 439, 474 to 494, and 498 to 518; these read AGLIAGAIGLALVVLYLLFYY, FIAVCSLLVSAGLTYVIMALL, IGFALNLPAVCGAIVAIGITA, ILVSDFVSFLAAAVLFIVTVG, and GFAFTLGLTTLLDVVVVFLFT. Residues 540–570 form a disordered region; that stretch reads LDPKALGAKPPLRRTRRPSRPAAGPVDPKEA.

Belongs to the SecD/SecF family. SecD subfamily. Forms a complex with SecF. Part of the essential Sec protein translocation apparatus which comprises SecA, SecYEG and auxiliary proteins SecDF. Other proteins may also be involved.

The protein localises to the cell membrane. Its function is as follows. Part of the Sec protein translocase complex. Interacts with the SecYEG preprotein conducting channel. SecDF uses the proton motive force (PMF) to complete protein translocation after the ATP-dependent function of SecA. In Streptomyces coelicolor (strain ATCC BAA-471 / A3(2) / M145), this protein is Protein translocase subunit SecD.